Consider the following 466-residue polypeptide: Asparagine--tRNA ligase (466 aa).

This sequence belongs to the class-II aminoacyl-tRNA synthetase family. As to quaternary structure, homodimer.

The protein localises to the cytoplasm. It catalyses the reaction tRNA(Asn) + L-asparagine + ATP = L-asparaginyl-tRNA(Asn) + AMP + diphosphate + H(+). In Shewanella baltica (strain OS195), this protein is Asparagine--tRNA ligase.